The primary structure comprises 58 residues: Keratin-associated protein 19-9b (58 aa).

The tract at residues 6–52 (GNYYGGLGYGLGGFGGFGGLGYGYGSSYGLGGYGGYGYFSPSFYGGY) is 12 X 2 AA repeats of G-[YCGS].

This sequence belongs to the KRTAP type 19 family. In terms of assembly, interacts with hair keratins.

Functionally, in the hair cortex, hair keratin intermediate filaments are embedded in an interfilamentous matrix, consisting of hair keratin-associated proteins (KRTAP), which are essential for the formation of a rigid and resistant hair shaft through their extensive disulfide bond cross-linking with abundant cysteine residues of hair keratins. The matrix proteins include the high-sulfur and high-glycine-tyrosine keratins. The chain is Keratin-associated protein 19-9b (Krtap19-9b) from Mus musculus (Mouse).